Here is a 96-residue protein sequence, read N- to C-terminus: Co-chaperonin GroES (96 aa).

It belongs to the GroES chaperonin family. Heptamer of 7 subunits arranged in a ring. Interacts with the chaperonin GroEL.

It localises to the cytoplasm. Its function is as follows. Together with the chaperonin GroEL, plays an essential role in assisting protein folding. The GroEL-GroES system forms a nano-cage that allows encapsulation of the non-native substrate proteins and provides a physical environment optimized to promote and accelerate protein folding. GroES binds to the apical surface of the GroEL ring, thereby capping the opening of the GroEL channel. In Chromohalobacter salexigens (strain ATCC BAA-138 / DSM 3043 / CIP 106854 / NCIMB 13768 / 1H11), this protein is Co-chaperonin GroES.